Here is a 122-residue protein sequence, read N- to C-terminus: Fluoride-specific ion channel FluC (122 aa).

4 helical membrane-spanning segments follow: residues 1 to 21, 34 to 54, 60 to 80, and 100 to 120; these read MIGT…SRML, FPYG…LFFS, GVHI…FTTF, and FLNI…GFLI.

It belongs to the fluoride channel Fluc/FEX (TC 1.A.43) family.

It localises to the cell inner membrane. The enzyme catalyses fluoride(in) = fluoride(out). Its function is as follows. Fluoride-specific ion channel. Important for reducing fluoride concentration in the cell, thus reducing its toxicity. This is Fluoride-specific ion channel FluC from Campylobacter lari (strain RM2100 / D67 / ATCC BAA-1060).